The primary structure comprises 436 residues: tRNA-2-methylthio-N(6)-dimethylallyladenosine synthase (436 aa).

One can recognise an MTTase N-terminal domain in the interval 1-115 (MRVFFKTYGC…IAEVLQKAAR (115 aa)). 6 residues coordinate [4Fe-4S] cluster: C10, C46, C80, C151, C155, and C158. The 232-residue stretch at 137 to 368 (RFSKHHAWIT…LELQKQINRE (232 aa)) folds into the Radical SAM core domain. A TRAM domain is found at 371–432 (MQYLGKVVEI…AGPLYGKLQK (62 aa)).

The protein belongs to the methylthiotransferase family. MiaB subfamily. Monomer. [4Fe-4S] cluster serves as cofactor.

The protein resides in the cytoplasm. The enzyme catalyses N(6)-dimethylallyladenosine(37) in tRNA + (sulfur carrier)-SH + AH2 + 2 S-adenosyl-L-methionine = 2-methylsulfanyl-N(6)-dimethylallyladenosine(37) in tRNA + (sulfur carrier)-H + 5'-deoxyadenosine + L-methionine + A + S-adenosyl-L-homocysteine + 2 H(+). In terms of biological role, catalyzes the methylthiolation of N6-(dimethylallyl)adenosine (i(6)A), leading to the formation of 2-methylthio-N6-(dimethylallyl)adenosine (ms(2)i(6)A) at position 37 in tRNAs that read codons beginning with uridine. In Pseudothermotoga lettingae (strain ATCC BAA-301 / DSM 14385 / NBRC 107922 / TMO) (Thermotoga lettingae), this protein is tRNA-2-methylthio-N(6)-dimethylallyladenosine synthase.